The primary structure comprises 351 residues: 3-dehydroquinate synthase (351 aa).

NAD(+) contacts are provided by residues 60-65 (DGEEYK), 94-98 (GVISD), 118-119 (TT), lysine 131, lysine 140, and 158-161 (FLKT). Residues glutamate 173, histidine 239, and histidine 256 each contribute to the Zn(2+) site.

The protein belongs to the sugar phosphate cyclases superfamily. Dehydroquinate synthase family. The cofactor is Co(2+). Zn(2+) serves as cofactor. Requires NAD(+) as cofactor.

The protein resides in the cytoplasm. The enzyme catalyses 7-phospho-2-dehydro-3-deoxy-D-arabino-heptonate = 3-dehydroquinate + phosphate. Its pathway is metabolic intermediate biosynthesis; chorismate biosynthesis; chorismate from D-erythrose 4-phosphate and phosphoenolpyruvate: step 2/7. Functionally, catalyzes the conversion of 3-deoxy-D-arabino-heptulosonate 7-phosphate (DAHP) to dehydroquinate (DHQ). The chain is 3-dehydroquinate synthase from Campylobacter jejuni subsp. doylei (strain ATCC BAA-1458 / RM4099 / 269.97).